A 69-amino-acid chain; its full sequence is DNA-directed RNA polymerase subunit omega (69 aa).

This sequence belongs to the RNA polymerase subunit omega family. The RNAP catalytic core consists of 2 alpha, 1 beta, 1 beta' and 1 omega subunit. When a sigma factor is associated with the core the holoenzyme is formed, which can initiate transcription.

It catalyses the reaction RNA(n) + a ribonucleoside 5'-triphosphate = RNA(n+1) + diphosphate. In terms of biological role, promotes RNA polymerase assembly. Latches the N- and C-terminal regions of the beta' subunit thereby facilitating its interaction with the beta and alpha subunits. The protein is DNA-directed RNA polymerase subunit omega of Geobacter metallireducens (strain ATCC 53774 / DSM 7210 / GS-15).